A 142-amino-acid polypeptide reads, in one-letter code: Large ribosomal subunit protein uL13 (142 aa).

This sequence belongs to the universal ribosomal protein uL13 family. Part of the 50S ribosomal subunit.

This protein is one of the early assembly proteins of the 50S ribosomal subunit, although it is not seen to bind rRNA by itself. It is important during the early stages of 50S assembly. This Cupriavidus necator (strain ATCC 17699 / DSM 428 / KCTC 22496 / NCIMB 10442 / H16 / Stanier 337) (Ralstonia eutropha) protein is Large ribosomal subunit protein uL13.